A 467-amino-acid polypeptide reads, in one-letter code: Serine decarboxylase 2 (467 aa).

Substrate is bound at residue His178. Lys290 is subject to N6-(pyridoxal phosphate)lysine.

This sequence belongs to the group II decarboxylase family. It depends on pyridoxal 5'-phosphate as a cofactor.

The catalysed reaction is L-serine + H(+) = ethanolamine + CO2. In terms of biological role, catalyzes the biosynthesis of ethanolamine from serine. Decarboxylation of free serine is the major source of ethanolamine production in plants and ethanolamine metabolism is crucial for the synthesis of choline, phosphatidylethanolamine (PE) and phosphatidylcholine (PC), and thus for plant growth. The chain is Serine decarboxylase 2 from Oryza sativa subsp. japonica (Rice).